Here is a 216-residue protein sequence, read N- to C-terminus: Cytochrome c biogenesis ATP-binding export protein CcmA (216 aa).

An ABC transporter domain is found at 11 to 216 (VSASKLTCIR…RKIRLDYRFV (206 aa)). 43 to 50 (GPNGAGKT) serves as a coordination point for ATP.

The protein belongs to the ABC transporter superfamily. CcmA exporter (TC 3.A.1.107) family. In terms of assembly, the complex is composed of two ATP-binding proteins (CcmA) and two transmembrane proteins (CcmB).

It localises to the cell inner membrane. The enzyme catalyses heme b(in) + ATP + H2O = heme b(out) + ADP + phosphate + H(+). Functionally, part of the ABC transporter complex CcmAB involved in the biogenesis of c-type cytochromes; once thought to export heme, this seems not to be the case, but its exact role is uncertain. Responsible for energy coupling to the transport system. This Shewanella sp. (strain MR-7) protein is Cytochrome c biogenesis ATP-binding export protein CcmA.